The following is a 116-amino-acid chain: Large ribosomal subunit protein bL17 (116 aa).

The protein belongs to the bacterial ribosomal protein bL17 family. In terms of assembly, part of the 50S ribosomal subunit. Contacts protein L32.

This is Large ribosomal subunit protein bL17 from Prochlorococcus marinus subsp. pastoris (strain CCMP1986 / NIES-2087 / MED4).